The following is a 146-amino-acid chain: Protein SprT-like (146 aa).

The 136-residue stretch at 6-141 (YVKTVSIEDF…GCGLCQGKLI (136 aa)) folds into the SprT-like domain. His64 serves as a coordination point for Zn(2+). Glu65 is a catalytic residue. His68 contributes to the Zn(2+) binding site.

The protein belongs to the SprT family. Zn(2+) serves as cofactor.

The protein localises to the cytoplasm. This chain is Protein SprT-like, found in Streptococcus thermophilus (strain CNRZ 1066).